Here is a 386-residue protein sequence, read N- to C-terminus: MNIHEYQGKAVLRSYGVSVPNGKVAFTVEEAVEAAKELGTDVCVVKAQIHAGGRGKAGGVKVAKNLDEVRTYAESILGTTLVTHQTGPEGKEVKRLLIEEGCDIKKEYYVGLVLDRATSQVVLMASEEGGTEIEEVAEKTPEKIFKEYIDPAVGLQGFQARRIAFNIHIPKELVGQAVKFMMGLYRAFIEKDCSIAEINPLVTTGEGKVMALDAKLNFDSNALYRHKDILELRDLDEEDSKEIEASKYDLNYIPLDGNIGCMVNGAGLAMATMDIIKHYHGDPANFLDVGGGATAEKVTEAFKIILSDKNVKGIFVNIFGGIMKCDVIAEGVIEATKQVGLELPLVVRLEGTNVELGKKILNESGLNIVAAESMADGAQKIVSLVG.

The 236-residue stretch at 9 to 244 (KAVLRSYGVS…LDEEDSKEIE (236 aa)) folds into the ATP-grasp domain. ATP-binding positions include Lys46, 53-55 (GRG), Glu99, Cys102, and Glu107. Residues Asn199 and Asp213 each contribute to the Mg(2+) site. Residues Asn264 and 321–323 (GIM) each bind substrate.

Belongs to the succinate/malate CoA ligase beta subunit family. As to quaternary structure, heterotetramer of two alpha and two beta subunits. The cofactor is Mg(2+).

The enzyme catalyses succinate + ATP + CoA = succinyl-CoA + ADP + phosphate. It carries out the reaction GTP + succinate + CoA = succinyl-CoA + GDP + phosphate. It participates in carbohydrate metabolism; tricarboxylic acid cycle; succinate from succinyl-CoA (ligase route): step 1/1. In terms of biological role, succinyl-CoA synthetase functions in the citric acid cycle (TCA), coupling the hydrolysis of succinyl-CoA to the synthesis of either ATP or GTP and thus represents the only step of substrate-level phosphorylation in the TCA. The beta subunit provides nucleotide specificity of the enzyme and binds the substrate succinate, while the binding sites for coenzyme A and phosphate are found in the alpha subunit. This chain is Succinate--CoA ligase [ADP-forming] subunit beta, found in Bacillus cereus (strain G9842).